The sequence spans 856 residues: DNA mismatch repair protein MutS (856 aa).

Position 623–630 (623–630 (GPNMSGKS)) interacts with ATP.

The protein belongs to the DNA mismatch repair MutS family.

Functionally, this protein is involved in the repair of mismatches in DNA. It is possible that it carries out the mismatch recognition step. This protein has a weak ATPase activity. This chain is DNA mismatch repair protein MutS, found in Natronomonas pharaonis (strain ATCC 35678 / DSM 2160 / CIP 103997 / JCM 8858 / NBRC 14720 / NCIMB 2260 / Gabara) (Halobacterium pharaonis).